The sequence spans 90 residues: UPF0367 protein PMT9312_0127 (90 aa).

Belongs to the UPF0367 family.

In Prochlorococcus marinus (strain MIT 9312), this protein is UPF0367 protein PMT9312_0127.